An 863-amino-acid chain; its full sequence is Leucine--tRNA ligase (863 aa).

A 'HIGH' region motif is present at residues 42 to 52; that stretch reads PYPSGRLHMGH. Residues 622–626 carry the 'KMSKS' region motif; that stretch reads KMSKS. Lysine 625 contributes to the ATP binding site.

The protein belongs to the class-I aminoacyl-tRNA synthetase family.

Its subcellular location is the cytoplasm. The enzyme catalyses tRNA(Leu) + L-leucine + ATP = L-leucyl-tRNA(Leu) + AMP + diphosphate. The polypeptide is Leucine--tRNA ligase (Shewanella denitrificans (strain OS217 / ATCC BAA-1090 / DSM 15013)).